The chain runs to 264 residues: Thymidylate synthase (264 aa).

R21 contributes to the dUMP binding site. A (6R)-5,10-methylene-5,6,7,8-tetrahydrofolate-binding site is contributed by H51. 126 to 127 (RR) provides a ligand contact to dUMP. Residue C146 is the Nucleophile of the active site. DUMP is bound by residues 166 to 169 (RSAD), N177, and 207 to 209 (HLY). Position 169 (D169) interacts with (6R)-5,10-methylene-5,6,7,8-tetrahydrofolate. Position 263 (A263) interacts with (6R)-5,10-methylene-5,6,7,8-tetrahydrofolate.

Belongs to the thymidylate synthase family. Bacterial-type ThyA subfamily. In terms of assembly, homodimer.

The protein localises to the cytoplasm. The catalysed reaction is dUMP + (6R)-5,10-methylene-5,6,7,8-tetrahydrofolate = 7,8-dihydrofolate + dTMP. The protein operates within pyrimidine metabolism; dTTP biosynthesis. In terms of biological role, catalyzes the reductive methylation of 2'-deoxyuridine-5'-monophosphate (dUMP) to 2'-deoxythymidine-5'-monophosphate (dTMP) while utilizing 5,10-methylenetetrahydrofolate (mTHF) as the methyl donor and reductant in the reaction, yielding dihydrofolate (DHF) as a by-product. This enzymatic reaction provides an intracellular de novo source of dTMP, an essential precursor for DNA biosynthesis. In Chromobacterium violaceum (strain ATCC 12472 / DSM 30191 / JCM 1249 / CCUG 213 / NBRC 12614 / NCIMB 9131 / NCTC 9757 / MK), this protein is Thymidylate synthase.